Here is a 492-residue protein sequence, read N- to C-terminus: Asparagine--tRNA ligase, mitochondrial (492 aa).

It belongs to the class-II aminoacyl-tRNA synthetase family.

The protein resides in the mitochondrion matrix. The enzyme catalyses tRNA(Asn) + L-asparagine + ATP = L-asparaginyl-tRNA(Asn) + AMP + diphosphate + H(+). In terms of biological role, catalyzes the attachment of asparagine to tRNA(Asn) in the mitochondrion. The protein is Asparagine--tRNA ligase, mitochondrial (SLM5) of Saccharomyces cerevisiae (strain ATCC 204508 / S288c) (Baker's yeast).